Consider the following 287-residue polypeptide: Nucleotide-binding protein VP2673 (287 aa).

8 to 15 contributes to the ATP binding site; sequence GHSGAGKS. A GTP-binding site is contributed by 56–59; the sequence is DIRN.

This sequence belongs to the RapZ-like family.

Functionally, displays ATPase and GTPase activities. The sequence is that of Nucleotide-binding protein VP2673 from Vibrio parahaemolyticus serotype O3:K6 (strain RIMD 2210633).